Here is a 230-residue protein sequence, read N- to C-terminus: ATP synthase subunit a (230 aa).

A run of 5 helical transmembrane segments spans residues 17-37, 78-98, 107-127, 165-187, and 198-218; these read LPITQSVLTTWFIMISLFIMA, IFPFVATLWIFILVSNLIGVI, DLSVTASLAMMTFLSVHWFGI, LFGNIMSLQLTALIVLMIAGFLV, and EAIIQAYIFGMLALIYIAGGI.

The protein belongs to the ATPase A chain family. In terms of assembly, F-type ATPases have 2 components, CF(1) - the catalytic core - and CF(0) - the membrane proton channel. CF(1) has five subunits: alpha(3), beta(3), gamma(1), delta(1), epsilon(1). CF(0) has three main subunits: a(1), b(2) and c(9-12). The alpha and beta chains form an alternating ring which encloses part of the gamma chain. CF(1) is attached to CF(0) by a central stalk formed by the gamma and epsilon chains, while a peripheral stalk is formed by the delta and b chains.

It localises to the cell inner membrane. Functionally, key component of the proton channel; it plays a direct role in the translocation of protons across the membrane. The polypeptide is ATP synthase subunit a (Legionella pneumophila (strain Corby)).